The sequence spans 327 residues: Phenylalanine--tRNA ligase alpha subunit (327 aa).

Mg(2+) is bound at residue Glu252.

The protein belongs to the class-II aminoacyl-tRNA synthetase family. Phe-tRNA synthetase alpha subunit type 1 subfamily. In terms of assembly, tetramer of two alpha and two beta subunits. The cofactor is Mg(2+).

The protein localises to the cytoplasm. The enzyme catalyses tRNA(Phe) + L-phenylalanine + ATP = L-phenylalanyl-tRNA(Phe) + AMP + diphosphate + H(+). The chain is Phenylalanine--tRNA ligase alpha subunit from Salmonella choleraesuis (strain SC-B67).